A 157-amino-acid polypeptide reads, in one-letter code: 6,7-dimethyl-8-ribityllumazine synthase 1 (157 aa).

5-amino-6-(D-ribitylamino)uracil-binding positions include Phe-22, Ala-53–Glu-55, and Thr-82–Ile-84. Glu-87–Thr-88 contacts (2S)-2-hydroxy-3-oxobutyl phosphate. His-90 functions as the Proton donor in the catalytic mechanism. Asn-115 is a binding site for 5-amino-6-(D-ribitylamino)uracil. Arg-129 lines the (2S)-2-hydroxy-3-oxobutyl phosphate pocket.

This sequence belongs to the DMRL synthase family. In terms of assembly, homopentamer.

The enzyme catalyses (2S)-2-hydroxy-3-oxobutyl phosphate + 5-amino-6-(D-ribitylamino)uracil = 6,7-dimethyl-8-(1-D-ribityl)lumazine + phosphate + 2 H2O + H(+). The protein operates within cofactor biosynthesis; riboflavin biosynthesis; riboflavin from 2-hydroxy-3-oxobutyl phosphate and 5-amino-6-(D-ribitylamino)uracil: step 1/2. Functionally, catalyzes the formation of 6,7-dimethyl-8-ribityllumazine by condensation of 5-amino-6-(D-ribitylamino)uracil with 3,4-dihydroxy-2-butanone 4-phosphate. This is the penultimate step in the biosynthesis of riboflavin. The protein is 6,7-dimethyl-8-ribityllumazine synthase 1 (ribH1) of Brucella melitensis biotype 1 (strain ATCC 23456 / CCUG 17765 / NCTC 10094 / 16M).